We begin with the raw amino-acid sequence, 455 residues long: Growth/differentiation factor 9 (455 aa).

The signal sequence occupies residues 1-24 (MALPNKFLLWFYCFAWLCFPVSLG). Residues 25–320 (SQASGGDAQI…GRSSHHRHRR (296 aa)) constitute a propeptide that is removed on maturation. 5 N-linked (GlcNAc...) asparagine glycosylation sites follow: N106, N163, N236, N255, and N269. The disordered stretch occupies residues 305–328 (EDAAEDGRSSHHRHRRGQETVSSE). N-linked (GlcNAc...) asparagine glycosylation occurs at N339. Cystine bridges form between C354-C420, C383-C452, and C387-C454.

This sequence belongs to the TGF-beta family. In terms of assembly, homodimer or heterodimer (Potential). But, in contrast to other members of this family, cannot be disulfide-linked. In terms of processing, phosphorylated; phosphorylation is critical for GDF9 function.

It localises to the secreted. In terms of biological role, required for ovarian folliculogenesis. This chain is Growth/differentiation factor 9 (GDF9), found in Papio anubis (Olive baboon).